Reading from the N-terminus, the 115-residue chain is MKILVALAVLALVSTQLFAEDIRANDDLNYWSDWSDSDQIKEELPEPFEHLLQRIARRPKPQQFFGLMGKRDAGHGQISHKRHKTDSFVGLMGKRALNSVAYERSAMQNYERRRK.

The first 19 residues, 1–19, serve as a signal peptide directing secretion; the sequence is MKILVALAVLALVSTQLFA. The propeptide occupies 20–56; sequence EDIRANDDLNYWSDWSDSDQIKEELPEPFEHLLQRIA. Met-68 and Met-92 each carry methionine amide.

This sequence belongs to the tachykinin family. Post-translationally, the substance P form is cleaved at Pro-59 by the prolyl endopeptidase FAP (seprase) activity (in vitro). Substance P is also cleaved and degraded by Angiotensin-converting enzyme (ACE) and neprilysin (MME).

The protein resides in the secreted. In terms of biological role, tachykinins are active peptides which excite neurons, evoke behavioral responses, are potent vasodilators and secretagogues, and contract (directly or indirectly) many smooth muscles. The polypeptide is Protachykinin-1 (TAC1) (Oryctolagus cuniculus (Rabbit)).